The chain runs to 37 residues: Cytochrome b6-f complex subunit 5 (37 aa).

The helical transmembrane segment at 5–25 (LLSGIVLGLIPITLLGLFVTA) threads the bilayer.

This sequence belongs to the PetG family. As to quaternary structure, the 4 large subunits of the cytochrome b6-f complex are cytochrome b6, subunit IV (17 kDa polypeptide, PetD), cytochrome f and the Rieske protein, while the 4 small subunits are PetG, PetL, PetM and PetN. The complex functions as a dimer.

The protein resides in the plastid. It is found in the chloroplast thylakoid membrane. Functionally, component of the cytochrome b6-f complex, which mediates electron transfer between photosystem II (PSII) and photosystem I (PSI), cyclic electron flow around PSI, and state transitions. PetG is required for either the stability or assembly of the cytochrome b6-f complex. The sequence is that of Cytochrome b6-f complex subunit 5 from Marchantia polymorpha (Common liverwort).